Reading from the N-terminus, the 508-residue chain is Aspartic proteinase A3 (508 aa).

Residues 1–25 form the signal peptide; the sequence is MGTRFQSFLLVFLLSCLILISTASC. The propeptide at 26–69 is activation peptide; that stretch reads ERNGDGTIRIGLKKRKLDRSNRLASQLFLKNRGSHWSPKHYFRL. Positions 87 to 505 constitute a Peptidase A1 domain; that stretch reads YYGDITIGTP…DYGKGRVGFA (419 aa). D105 is a catalytic residue. Intrachain disulfides connect C118-C124 and C283-C287. The active site involves D292. One can recognise a Saposin B-type domain in the interval 317-419; the sequence is IVSRECKAVV…AELCDHIPTQ (103 aa). 4 disulfide bridges follow: C322-C413, C347-C385, C353-C382, and C427-C464. N-linked (GlcNAc...) asparagine glycosylation is present at N399.

This sequence belongs to the peptidase A1 family. Expressed in petals, carpels and seed pods.

Its subcellular location is the secreted. In terms of biological role, involved in the processing and degradation of storage proteins. This chain is Aspartic proteinase A3 (APA3), found in Arabidopsis thaliana (Mouse-ear cress).